Here is a 274-residue protein sequence, read N- to C-terminus: 2,3,4,5-tetrahydropyridine-2,6-dicarboxylate N-succinyltransferase (274 aa).

Residues Arg104 and Asp141 each contribute to the substrate site.

Belongs to the transferase hexapeptide repeat family. In terms of assembly, homotrimer.

The protein resides in the cytoplasm. It carries out the reaction (S)-2,3,4,5-tetrahydrodipicolinate + succinyl-CoA + H2O = (S)-2-succinylamino-6-oxoheptanedioate + CoA. Its pathway is amino-acid biosynthesis; L-lysine biosynthesis via DAP pathway; LL-2,6-diaminopimelate from (S)-tetrahydrodipicolinate (succinylase route): step 1/3. This is 2,3,4,5-tetrahydropyridine-2,6-dicarboxylate N-succinyltransferase from Yersinia pestis.